Reading from the N-terminus, the 312-residue chain is Malate dehydrogenase (312 aa).

NAD(+) contacts are provided by residues 7-13 and Asp34; that span reads GAAGGIG. Residues Arg81 and Arg87 each coordinate substrate. NAD(+)-binding positions include Asn94 and 117–119; that span reads ITN. The substrate site is built by Asn119 and Arg153. Residue His177 is the Proton acceptor of the active site. An NAD(+)-binding site is contributed by Met227.

The protein belongs to the LDH/MDH superfamily. MDH type 1 family. Homodimer.

The catalysed reaction is (S)-malate + NAD(+) = oxaloacetate + NADH + H(+). Catalyzes the reversible oxidation of malate to oxaloacetate. In Edwardsiella ictaluri (strain 93-146), this protein is Malate dehydrogenase.